A 394-amino-acid polypeptide reads, in one-letter code: Arogenate dehydratase 2 (394 aa).

Residues 1-24 (MAATTTLRSPKIPHPPPESTPSNL) are disordered. A chloroplast-targeting transit peptide spans 1 to 47 (MAATTTLRSPKIPHPPPESTPSNLSYLSQISLTPVPKRRRFISIYAC). One can recognise a Prephenate dehydratase domain in the interval 108–283 (RVAYQGVRGA…NVTRFLMLAR (176 aa)). The region spanning 297 to 388 (SVVFSLDEGP…TFLRVLGSYP (92 aa)) is the ACT domain.

As to expression, expressed at low levels in petals (corollas and tubes), stems, leaves, pistils, stamens, ovaries and sepals.

The protein resides in the plastid. The protein localises to the chloroplast stroma. It catalyses the reaction prephenate + H(+) = 3-phenylpyruvate + CO2 + H2O. It carries out the reaction L-arogenate + H(+) = L-phenylalanine + CO2 + H2O. It functions in the pathway amino-acid biosynthesis; L-phenylalanine biosynthesis; L-phenylalanine from L-arogenate: step 1/1. Its function is as follows. Converts the prephenate and L-arogenate produced from the shikimate-chorismate pathway into 3-phenylpyruvate and phenylalanine (Phe), respectively. Involved in floral volatile benzenoids and phenylpropanoids (FVBP) production. This Petunia hybrida (Petunia) protein is Arogenate dehydratase 2.